Consider the following 765-residue polypeptide: MSFLWGSTKSKKGKNKKAAGSLPSGVVPQQRVKPTRKNVPIDYPRTLEKVHGESLIFRTSLLSELVSTGKSGIGPPDLIHCTELDKFHDEKIGEFFYITGIDASSVSMPIAFLKLIKWNDGKKLKSASLKNDDITTYCTFNIFQKLDIRLRYESEDVYQVNIVDCLNGNNEIPLSDLIWEETFVSCCIRSVIINSDFERKIPGLVELPFVFENRCASDYKRVIDSLCKFLPRFLECGWDSTKSVYATILNNYLTESLLVFLSITPEFITDYAIQVLDNLMTNDPSNSRYYAIVIISIMERSNDRDVEMIKRIHEILDLLLPVLYGLPSDEPYISDLINCITDVLSIQARFLLNNNDYELSLSISTLATNLSSDNFESWYLLSKGYIFSQQYDKALLSINSMPCLAEYDIVKQAQINAFKFYMNYYKAPLCHSREHCTMTSHELNHLMNIMHYENELELKTIIFGRTVMPNESKYGCIEEIWNKSCLELGPICGPQSDNLINFVSQQEVNTVGDMLLLKRSKETRQESWFIKQVRLLLMELVARIGWNALLQLRSDVFVMESKFKMIESSDKLSTELRQKRLCQRWFDAMFLDVYEDLSISTSSQENKATAKYSGLEWELLGLTLLRVSDLPDAVACLRTSILARFDPISCHHLLNFYLTMDFNDEFMRRFDVDIILDLLVKLISFRIRFYDRFQIFSLQVLRKLEGQLGSEIIKNKIINSPYGQAGITSVIDYMLECLSKNRNEACLAYERPLPDLPSTIKPLAD.

The segment at 1–31 (MSFLWGSTKSKKGKNKKAAGSLPSGVVPQQR) is disordered. The tract at residues 735–765 (LECLSKNRNEACLAYERPLPDLPSTIKPLAD) is CHS5-binding.

This sequence belongs to the CHAPS family. As to quaternary structure, component of the CHS5/6 complex composed of the 4 CHAPS proteins BCH1, BCH2, BUD7, and CHS6 as well as at least CHS5 and GTP-bound ARF1. The complex interacts with the cargo protein CHS3.

The protein resides in the golgi apparatus. It localises to the trans-Golgi network membrane. Its function is as follows. Member of the CHS5-ARF1P-binding proteins (CHAPS) which mediates export of specific cargo proteins, including chitin synthase CHS3. This Saccharomyces cerevisiae (strain ATCC 204508 / S288c) (Baker's yeast) protein is Protein BCH2 (BCH2).